The following is a 172-amino-acid chain: Adrenodoxin homolog, mitochondrial (172 aa).

A mitochondrion-targeting transit peptide spans 1–16 (MLKIVTRAGHTARISN). In terms of domain architecture, 2Fe-2S ferredoxin-type spans 61-163 (LKITFILKDG…GIRVALPQMT (103 aa)). Residues cysteine 98, cysteine 104, cysteine 107, and cysteine 144 each contribute to the [2Fe-2S] cluster site.

Belongs to the adrenodoxin/putidaredoxin family. In terms of assembly, interacts in its reduced state with the apo form of ISU1. [2Fe-2S] cluster serves as cofactor.

The protein resides in the mitochondrion matrix. Its function is as follows. Iron-sulfur protein that transfers electrons in a wide variety of metabolic reactions. Involved in heme A biosynthesis and in iron-sulfur cluster assembly. Transfers electrons from adrenodoxin reductase ARH1 to heme A synthase COX15, a heme protein that catalyzes the conversion of heme O to heme A. Required for the de novo synthesis of Fe-S clusters on iron sulfur cluster assembly protein ISU1. Interact in its reduced state with ISU1 to productively deliver electrons for Fe-S cluster synthesis. Essential for coenzyme Q biosynthesis. May transfer the electrons required for the hydroxylation reaction performed by COQ6. In Saccharomyces cerevisiae (strain ATCC 204508 / S288c) (Baker's yeast), this protein is Adrenodoxin homolog, mitochondrial.